Consider the following 309-residue polypeptide: Putative glycosyltransferase 48 (309 aa).

Belongs to the glycosyltransferase group 1 family. Glycosyltransferase 4 subfamily.

This Saccharolobus islandicus (Sulfolobus islandicus) protein is Putative glycosyltransferase 48 (SIFV0048).